A 120-amino-acid polypeptide reads, in one-letter code: Holo-[acyl-carrier-protein] synthase (120 aa).

Residues D8 and E58 each coordinate Mg(2+).

Belongs to the P-Pant transferase superfamily. AcpS family. Mg(2+) is required as a cofactor.

It localises to the cytoplasm. It catalyses the reaction apo-[ACP] + CoA = holo-[ACP] + adenosine 3',5'-bisphosphate + H(+). Functionally, transfers the 4'-phosphopantetheine moiety from coenzyme A to a Ser of acyl-carrier-protein. This chain is Holo-[acyl-carrier-protein] synthase, found in Anoxybacillus flavithermus (strain DSM 21510 / WK1).